A 268-amino-acid chain; its full sequence is 3-deoxy-manno-octulosonate cytidylyltransferase (268 aa).

Belongs to the KdsB family.

Its subcellular location is the cytoplasm. The enzyme catalyses 3-deoxy-alpha-D-manno-oct-2-ulosonate + CTP = CMP-3-deoxy-beta-D-manno-octulosonate + diphosphate. Its pathway is nucleotide-sugar biosynthesis; CMP-3-deoxy-D-manno-octulosonate biosynthesis; CMP-3-deoxy-D-manno-octulosonate from 3-deoxy-D-manno-octulosonate and CTP: step 1/1. The protein operates within bacterial outer membrane biogenesis; lipopolysaccharide biosynthesis. Its function is as follows. Activates KDO (a required 8-carbon sugar) for incorporation into bacterial lipopolysaccharide in Gram-negative bacteria. The sequence is that of 3-deoxy-manno-octulosonate cytidylyltransferase from Psychrobacter cryohalolentis (strain ATCC BAA-1226 / DSM 17306 / VKM B-2378 / K5).